Here is a 250-residue protein sequence, read N- to C-terminus: Ribosomal RNA small subunit methyltransferase J (250 aa).

S-adenosyl-L-methionine is bound by residues 101–102, 117–118, 153–154, and Asp-171; these read RD, ER, and SS.

Belongs to the methyltransferase superfamily. RsmJ family.

It localises to the cytoplasm. It carries out the reaction guanosine(1516) in 16S rRNA + S-adenosyl-L-methionine = N(2)-methylguanosine(1516) in 16S rRNA + S-adenosyl-L-homocysteine + H(+). Its function is as follows. Specifically methylates the guanosine in position 1516 of 16S rRNA. The polypeptide is Ribosomal RNA small subunit methyltransferase J (Erwinia tasmaniensis (strain DSM 17950 / CFBP 7177 / CIP 109463 / NCPPB 4357 / Et1/99)).